The primary structure comprises 505 residues: Probable cytosol aminopeptidase (505 aa).

Mn(2+) is bound by residues Lys-269 and Asp-274. Lys-281 is an active-site residue. Residues Asp-292, Asp-351, and Glu-353 each contribute to the Mn(2+) site. Arg-355 is a catalytic residue.

The protein belongs to the peptidase M17 family. The cofactor is Mn(2+).

It is found in the cytoplasm. It carries out the reaction Release of an N-terminal amino acid, Xaa-|-Yaa-, in which Xaa is preferably Leu, but may be other amino acids including Pro although not Arg or Lys, and Yaa may be Pro. Amino acid amides and methyl esters are also readily hydrolyzed, but rates on arylamides are exceedingly low.. It catalyses the reaction Release of an N-terminal amino acid, preferentially leucine, but not glutamic or aspartic acids.. Its function is as follows. Presumably involved in the processing and regular turnover of intracellular proteins. Catalyzes the removal of unsubstituted N-terminal amino acids from various peptides. This is Probable cytosol aminopeptidase from Rhodococcus erythropolis (strain PR4 / NBRC 100887).